A 92-amino-acid chain; its full sequence is Transcriptional regulator WhiB1 (92 aa).

The 63-residue stretch at 12–74 (ACRDKDPELF…GGLSEDERRA (63 aa)) folds into the 4Fe-4S Wbl-type domain. [4Fe-4S] cluster is bound by residues C13, C41, C44, and C50.

It belongs to the WhiB family. It depends on [4Fe-4S] cluster as a cofactor. Post-translationally, the Fe-S cluster can be nitrosylated by nitric oxide (NO). In terms of processing, upon Fe-S cluster removal intramolecular disulfide bonds are formed.

It localises to the cytoplasm. In terms of biological role, acts as a transcriptional regulator. Probably redox-responsive. The apo- but not holo-form probably binds DNA. The protein is Transcriptional regulator WhiB1 (whiB1) of Bifidobacterium longum (strain NCC 2705).